We begin with the raw amino-acid sequence, 64 residues long: Large ribosomal subunit protein eL24 (64 aa).

Zn(2+) contacts are provided by cysteine 6, cysteine 9, cysteine 32, and cysteine 36. A C4-type zinc finger spans residues 6 to 36; the sequence is CNFCGKSIEPGTGKKFVKKDGSVMFICSSKC.

Belongs to the eukaryotic ribosomal protein eL24 family. As to quaternary structure, part of the 50S ribosomal subunit. Forms a cluster with proteins L3 and L14. The cofactor is Zn(2+).

Its function is as follows. Binds to the 23S rRNA. The protein is Large ribosomal subunit protein eL24 of Methanococcus aeolicus (strain ATCC BAA-1280 / DSM 17508 / OCM 812 / Nankai-3).